A 947-amino-acid chain; its full sequence is Microtubule cross-linking factor 3 (947 aa).

The signal sequence occupies residues 1 to 21; the sequence is MSQPPIGGAAPATAAASPAAA. Disordered regions lie at residues 1–251, 266–368, and 496–524; these read MSQP…SYWK, KERA…TLKN, and LSLKRRGSKDLPKSEKKAQQTPTEEDNED. 3 stretches are compositionally biased toward low complexity: residues 9-24, 72-81, and 109-137; these read AAPATAAASPAAAATE, QQQLQQQQQQ, and APKGAAPGAVQPVAGAEAAPAATLAALGG. Basic and acidic residues predominate over residues 141–151; that stretch reads GPPEEPPRELE. The span at 164–180 shows a compositional bias: gly residues; the sequence is GEGGGGGGEGGGAGGGS. Over residues 214-236 the composition is skewed to low complexity; the sequence is ASPSPSSSSAGKTPGTGSRNSGS. Gly residues predominate over residues 237–248; it reads GVAGGGSGGGGS. Low complexity-rich tracts occupy residues 287–297 and 304–325; these read SSRSSPVSGPP and AVASASPMAAAAEGPQQSAEGS. A coiled-coil region spans residues 342 to 726; the sequence is HPQQLQEQEE…GKVMQLQYEN (385 aa). Basic and acidic residues-rich tracts occupy residues 355–368 and 496–513; these read EMEKLREENETLKN and LSLKRRGSKDLPKSEKKA. Ser-569 carries the phosphoserine modification. The disordered stretch occupies residues 743-786; that stretch reads GIRGSPRDSDAESDAGKKESDDDSRPPHRKREGPIGGESDSEEV. The span at 747-768 shows a compositional bias: basic and acidic residues; sequence SPRDSDAESDAGKKESDDDSRP. Ser-781 carries the phosphoserine modification. The stretch at 811–835 forms a coiled coil; that stretch reads DRQQMKDIRSEAERLGKTIDRLIAD. Residues 915-935 form a helical membrane-spanning segment; that stretch reads PIILLILILVLFSSLSYTTIF.

It belongs to the MTCL family.

It localises to the membrane. The chain is Microtubule cross-linking factor 3 from Homo sapiens (Human).